The sequence spans 192 residues: BREX protein BrxB (192 aa).

It belongs to the BrxB family.

Its function is as follows. BREX systems (bacteriophage exclusion) provide immunity against bacteriophage. Part of a type 1 BREX system. This system allows phage adsorption but prevents phage DNA replication, without degradation of the phage DNA. Methylation of bacterial DNA by PglX probably guides self/non-self discrimination. When the brxA-brxB-brxC-pglX and pglZ-brxL operons are transformed into a susceptible B.subtilis strain (BEST7003) they confer resistance to bacteriophages SPbeta, SP16, Zeta, phi3T and SP02 and partial protection to phages SP01 and SP82G (these include lytic and temperate phage). They do not protect against phages phi105, rho10 or rho14. Additionally confers a very slight reduction in efficiency of plasmid transformation. The protein is BREX protein BrxB of Bacillus cereus (strain H3081.97).